We begin with the raw amino-acid sequence, 160 residues long: Phosphopantetheine adenylyltransferase (160 aa).

Serine 9 serves as a coordination point for substrate. ATP is bound by residues 9–10 (SF) and histidine 17. 3 residues coordinate substrate: lysine 41, valine 73, and lysine 87. ATP is bound by residues 88-90 (GLR), glutamate 98, and 122-128 (YSFVSSS).

The protein belongs to the bacterial CoaD family. In terms of assembly, homohexamer. Mg(2+) is required as a cofactor.

The protein localises to the cytoplasm. The enzyme catalyses (R)-4'-phosphopantetheine + ATP + H(+) = 3'-dephospho-CoA + diphosphate. It participates in cofactor biosynthesis; coenzyme A biosynthesis; CoA from (R)-pantothenate: step 4/5. Reversibly transfers an adenylyl group from ATP to 4'-phosphopantetheine, yielding dephospho-CoA (dPCoA) and pyrophosphate. The sequence is that of Phosphopantetheine adenylyltransferase from Mycobacterium leprae (strain TN).